Reading from the N-terminus, the 67-residue chain is MAILRSREIRDMSLEERADELENLNSELVRERALTSAGGAPENPGRIGEIRRTIARIKTIQHELNEI.

This sequence belongs to the universal ribosomal protein uL29 family.

The protein is Large ribosomal subunit protein uL29 of Methanosarcina barkeri (strain Fusaro / DSM 804).